The sequence spans 131 residues: Large ribosomal subunit protein uL18 (131 aa).

Belongs to the universal ribosomal protein uL18 family. In terms of assembly, part of the 50S ribosomal subunit; part of the 5S rRNA/L5/L18/L25 subcomplex. Contacts the 5S and 23S rRNAs.

Functionally, this is one of the proteins that bind and probably mediate the attachment of the 5S RNA into the large ribosomal subunit, where it forms part of the central protuberance. The polypeptide is Large ribosomal subunit protein uL18 (Corynebacterium kroppenstedtii (strain DSM 44385 / JCM 11950 / CIP 105744 / CCUG 35717)).